We begin with the raw amino-acid sequence, 274 residues long: Large ribosomal subunit protein uL2 (274 aa).

Residues 223-258 (VAMNPVDHPHGGGEGRTSGGRHPVTPWGIPTKGYKT) form a disordered region.

The protein belongs to the universal ribosomal protein uL2 family. As to quaternary structure, part of the 50S ribosomal subunit. Forms a bridge to the 30S subunit in the 70S ribosome.

In terms of biological role, one of the primary rRNA binding proteins. Required for association of the 30S and 50S subunits to form the 70S ribosome, for tRNA binding and peptide bond formation. It has been suggested to have peptidyltransferase activity; this is somewhat controversial. Makes several contacts with the 16S rRNA in the 70S ribosome. This Geotalea daltonii (strain DSM 22248 / JCM 15807 / FRC-32) (Geobacter daltonii) protein is Large ribosomal subunit protein uL2.